The chain runs to 106 residues: Putative double-stranded DNA mimic protein VV1228 (106 aa).

This sequence belongs to the putative dsDNA mimic protein family.

Its function is as follows. May act as a double-stranded DNA (dsDNA) mimic. Probably regulates the activity of a dsDNA-binding protein. In Vibrio vulnificus (strain YJ016), this protein is Putative double-stranded DNA mimic protein VV1228.